Consider the following 86-residue polypeptide: UPF0512 protein V (86 aa).

The protein belongs to the UPF0512 family.

In Dictyostelium discoideum (Social amoeba), this protein is UPF0512 protein V.